A 497-amino-acid chain; its full sequence is Zinc metalloproteinase nas-28 (497 aa).

Residues 1-14 (MFFPVVFFIPFVLG) form the signal peptide. A propeptide spanning residues 15 to 120 (APTQKALEKI…IENGNYRSKR (106 aa)) is cleaved from the precursor. The N-linked (GlcNAc...) asparagine glycan is linked to asparagine 76. Residues 121 to 319 (QAIVDTTNFW…IGVNKLYNCT (199 aa)) form the Peptidase M12A domain. Intrachain disulfides connect cysteine 164–cysteine 318, cysteine 185–cysteine 206, cysteine 328–cysteine 339, cysteine 331–cysteine 342, cysteine 344–cysteine 353, cysteine 364–cysteine 398, and cysteine 427–cysteine 447. A Zn(2+)-binding site is contributed by histidine 214. Glutamate 215 is a catalytic residue. Residues histidine 218 and histidine 224 each coordinate Zn(2+). Asparagine 317 carries N-linked (GlcNAc...) asparagine glycosylation. Residues 324 to 354 (IQMKCSNCGITDSRNCNQCKCPRYFTGASCD) form the EGF-like domain. The CUB domain occupies 364 to 483 (CNGAVLQATS…LTFSIQYRAV (120 aa)). Asparagine 394 is a glycosylation site (N-linked (GlcNAc...) asparagine).

Zn(2+) is required as a cofactor.

It is found in the secreted. In terms of biological role, metalloprotease. The polypeptide is Zinc metalloproteinase nas-28 (nas-28) (Caenorhabditis elegans).